The sequence spans 718 residues: Tensin-4 (718 aa).

The signal sequence occupies residues 1 to 14; sequence MSSSLLTGGHVVSL. 2 disordered regions span residues 188–244 and 272–437; these read RETR…GLRA and LPHS…AKDM. Residues 192–207 are compositionally biased toward polar residues; it reads SSSNESLIFSGNQGRG. Positions 208–219 are enriched in low complexity; the sequence is SSPHTPSSLSNS. Residue Ser230 is modified to Phosphoserine. Positions 272–304 are enriched in low complexity; the sequence is LPHSSLSSYPPSSRSLGSPASSSSSLHSLDRGS. Composition is skewed to polar residues over residues 306–316, 337–349, 367–393, and 405–415; these read CVRSSDAQVPS, QASS…TNSM, PAQQ…QATK, and TSPSHLCQATK. An SH2 domain is found at 451-558; it reads WFKPSITREQ…ALPCKLTIPQ (108 aa). A PTB domain is found at 585–711; sequence CHTLYLTSVS…SQVISLVTAL (127 aa).

This sequence belongs to the PTEN phosphatase protein family. Interacts (via SH2 domain) with Rho GTPase-activating protein DLC1 (via C-terminus); the interaction is independent of DLC1 tyrosine phosphorylation. Interacts with integrin ITGB1; the interaction displaces tensin TNS3 from the ITGB1 cytoplasmic tail and promotes ITGB1 stability. Interacts (via SH2 domain) with E3 ubiquitin-protein ligase CBL (phosphorylated on 'Tyr-781'); the interaction is enhanced in the presence of EGF and reduces interaction of CBL with EGFR. Interacts (via SH2 domain) with receptor tyrosine kinase MET (when phosphorylated); the interaction increases MET protein stability.

The protein localises to the cell junction. It localises to the focal adhesion. The protein resides in the cytoplasm. Its subcellular location is the cytoskeleton. In terms of biological role, promotes EGF-induced cell migration by displacing tensin TNS3 from the cytoplasmic tail of integrin ITGB1 which results in dissociation of TNS3 from focal adhesions, disassembly of actin stress fibers and initiation of cell migration. Suppresses ligand-induced degradation of EGFR by reducing EGFR ubiquitination in the presence of EGF. Increases MET protein stability by inhibiting MET endocytosis and subsequent lysosomal degradation which leads to increased cell survival, proliferation and migration. The protein is Tensin-4 (Tns4) of Rattus norvegicus (Rat).